Reading from the N-terminus, the 231-residue chain is MSDKPSELAVQKLVLFAVKGTATSTHNTVRPLILLDELGVPHEIYVVDRVSAPWFTEINPHRMVPVILEKSPDGRDTLRAWESTSTLMYIADAYDKDGTFGGRNVQESSDINNWLTLHTAALGPTAKYWLYFYKLHPEKLPKTIEKLRSNITVQYDILERRLNEPGQQYLAWLNEKFKRSSYNRRHCYASLCYEKYRRVVRAGVKVAQTARVVCPYGGDTRRGVWPARKST.

In terms of domain architecture, GST N-terminal spans 15–98 (LFAVKGTATS…YIADAYDKDG (84 aa)).

The protein belongs to the GST superfamily.

It catalyses the reaction RX + glutathione = an S-substituted glutathione + a halide anion + H(+). Its function is as follows. Conjugation of reduced glutathione to a wide number of exogenous and endogenous hydrophobic electrophiles. This Alternaria alternata (Alternaria rot fungus) protein is Glutathione-S-transferase.